Here is a 305-residue protein sequence, read N- to C-terminus: Glutaminase (305 aa).

The substrate site is built by Ser63, Asn113, Glu158, Asn165, Tyr189, Tyr241, and Val259.

The protein belongs to the glutaminase family. As to quaternary structure, homotetramer.

It carries out the reaction L-glutamine + H2O = L-glutamate + NH4(+). This is Glutaminase from Aliarcobacter butzleri (strain RM4018) (Arcobacter butzleri).